A 519-amino-acid polypeptide reads, in one-letter code: Maturase K (519 aa).

It belongs to the intron maturase 2 family. MatK subfamily.

The protein localises to the plastid. The protein resides in the chloroplast. Functionally, usually encoded in the trnK tRNA gene intron. Probably assists in splicing its own and other chloroplast group II introns. This is Maturase K from Cycas panzhihuaensis (Dukou cycad).